Consider the following 726-residue polypeptide: X-ray repair cross-complementing protein 5 (726 aa).

A VWFA domain is found at 8 to 160 (AVVLCMDVGL…ANLKKAEITL (153 aa)). The interval 137 to 164 (LSSPFSVDQLEVIIANLKKAEITLQFFL) is leucine-zipper. Residues 175 to 186 (GSSNNRGNAGSS) show a composition bias toward low complexity. Positions 175 to 198 (GSSNNRGNAGSSDRGCGPGKGLSD) are disordered. Residues 253–449 (GSSLSIRIVG…NKKFTPTESQ (197 aa)) form the Ku domain. Residues 714–722 (EDEGDVDDL) carry the EEXXXDL motif motif.

Belongs to the ku80 family. Heterodimer composed of xrcc5/Ku80 and xrcc6/Ku70. In terms of processing, ubiquitinated via 'Lys-48'-linked polyubiquitination at DNA double strand break sites (DSBs), leading to its release from DSBs and subsequent proteasomal degradation. Polyubiquitination is not required for completion of NHEJ. In terms of tissue distribution, expressed at high levels in oocyte and testis.

It localises to the nucleus. Functionally, single-stranded DNA-dependent ATP-dependent helicase that plays a key role in DNA non-homologous end joining (NHEJ). The protein is X-ray repair cross-complementing protein 5 of Xenopus laevis (African clawed frog).